The primary structure comprises 214 residues: Small ribosomal subunit protein eS6 (214 aa).

It belongs to the eukaryotic ribosomal protein eS6 family.

The chain is Small ribosomal subunit protein eS6 from Saccharolobus solfataricus (strain ATCC 35092 / DSM 1617 / JCM 11322 / P2) (Sulfolobus solfataricus).